The chain runs to 223 residues: Peptidyl-prolyl cis-trans isomerase, mitochondrial (223 aa).

The transit peptide at 1–44 (MFGPRHFSVLKTTGSLVSSTFSSSLKPTATFSCARAFSQTSSIM) directs the protein to the mitochondrion. The PPIase cyclophilin-type domain occupies 62–222 (NKPTSEIKAQ…KKPTIVDCGA (161 aa)).

The protein belongs to the cyclophilin-type PPIase family.

It localises to the mitochondrion. It is found in the cytoplasm. It carries out the reaction [protein]-peptidylproline (omega=180) = [protein]-peptidylproline (omega=0). With respect to regulation, binds cyclosporin A (CsA). CsA mediates some of its effects via an inhibitory action on PPIase. In terms of biological role, PPIases accelerate the folding of proteins. It catalyzes the cis-trans isomerization of proline imidic peptide bonds in oligopeptides. This is Peptidyl-prolyl cis-trans isomerase, mitochondrial (csr-1) from Neurospora crassa (strain ATCC 24698 / 74-OR23-1A / CBS 708.71 / DSM 1257 / FGSC 987).